Reading from the N-terminus, the 290-residue chain is Cilia- and flagella-associated protein 298-A (290 aa).

This sequence belongs to the CFAP298 family.

It localises to the cytoplasm. The protein resides in the cytoskeleton. It is found in the cilium basal body. Its function is as follows. Plays a role in motile cilium function, possibly by acting on outer dynein arm assembly. Seems to be important for initiation rather than maintenance of cilium motility. Required for correct positioning of the cilium at the apical cell surface, suggesting an additional role in the planar cell polarity (PCP) pathway. May suppress canonical Wnt signaling activity. The polypeptide is Cilia- and flagella-associated protein 298-A (cfap298-a) (Xenopus laevis (African clawed frog)).